Consider the following 207-residue polypeptide: Ribosomal RNA small subunit methyltransferase G (207 aa).

S-adenosyl-L-methionine is bound by residues Gly-73, Leu-78, 124–125, and Arg-139; that span reads VE.

It belongs to the methyltransferase superfamily. RNA methyltransferase RsmG family.

Its subcellular location is the cytoplasm. The enzyme catalyses guanosine(527) in 16S rRNA + S-adenosyl-L-methionine = N(7)-methylguanosine(527) in 16S rRNA + S-adenosyl-L-homocysteine. Specifically methylates the N7 position of guanine in position 527 of 16S rRNA. The polypeptide is Ribosomal RNA small subunit methyltransferase G (Salmonella choleraesuis (strain SC-B67)).